A 432-amino-acid polypeptide reads, in one-letter code: Enolase (432 aa).

Glutamine 167 is a (2R)-2-phosphoglycerate binding site. Glutamate 209 serves as the catalytic Proton donor. Aspartate 246, glutamate 289, and aspartate 316 together coordinate Mg(2+). The (2R)-2-phosphoglycerate site is built by lysine 341, arginine 370, serine 371, and lysine 392. Lysine 341 acts as the Proton acceptor in catalysis.

This sequence belongs to the enolase family. The cofactor is Mg(2+).

Its subcellular location is the cytoplasm. The protein localises to the secreted. It localises to the cell surface. It carries out the reaction (2R)-2-phosphoglycerate = phosphoenolpyruvate + H2O. It participates in carbohydrate degradation; glycolysis; pyruvate from D-glyceraldehyde 3-phosphate: step 4/5. Catalyzes the reversible conversion of 2-phosphoglycerate (2-PG) into phosphoenolpyruvate (PEP). It is essential for the degradation of carbohydrates via glycolysis. In Petrotoga mobilis (strain DSM 10674 / SJ95), this protein is Enolase.